Consider the following 435-residue polypeptide: Serine--tRNA ligase (435 aa).

240 to 242 is an L-serine binding site; sequence TAE. 271 to 273 provides a ligand contact to ATP; that stretch reads RSE. Glutamate 294 contacts L-serine. Position 358-361 (358-361) interacts with ATP; that stretch reads EISS. L-serine is bound at residue serine 393.

This sequence belongs to the class-II aminoacyl-tRNA synthetase family. Type-1 seryl-tRNA synthetase subfamily. In terms of assembly, homodimer. The tRNA molecule binds across the dimer.

The protein localises to the cytoplasm. It catalyses the reaction tRNA(Ser) + L-serine + ATP = L-seryl-tRNA(Ser) + AMP + diphosphate + H(+). The catalysed reaction is tRNA(Sec) + L-serine + ATP = L-seryl-tRNA(Sec) + AMP + diphosphate + H(+). The protein operates within aminoacyl-tRNA biosynthesis; selenocysteinyl-tRNA(Sec) biosynthesis; L-seryl-tRNA(Sec) from L-serine and tRNA(Sec): step 1/1. Functionally, catalyzes the attachment of serine to tRNA(Ser). Is also able to aminoacylate tRNA(Sec) with serine, to form the misacylated tRNA L-seryl-tRNA(Sec), which will be further converted into selenocysteinyl-tRNA(Sec). This chain is Serine--tRNA ligase, found in Cupriavidus metallidurans (strain ATCC 43123 / DSM 2839 / NBRC 102507 / CH34) (Ralstonia metallidurans).